A 676-amino-acid chain; its full sequence is DNA ligase (676 aa).

NAD(+) contacts are provided by residues 35–39, 84–85, and E115; these read DAVYD and SL. K117 (N6-AMP-lysine intermediate) is an active-site residue. 4 residues coordinate NAD(+): R138, E177, K296, and K320. The Zn(2+) site is built by C414, C417, C432, and C437. One can recognise a BRCT domain in the interval 599-676; it reads NANLKLVGKT…SEAELLKILA (78 aa).

It belongs to the NAD-dependent DNA ligase family. LigA subfamily. The cofactor is Mg(2+). Mn(2+) serves as cofactor.

It carries out the reaction NAD(+) + (deoxyribonucleotide)n-3'-hydroxyl + 5'-phospho-(deoxyribonucleotide)m = (deoxyribonucleotide)n+m + AMP + beta-nicotinamide D-nucleotide.. In terms of biological role, DNA ligase that catalyzes the formation of phosphodiester linkages between 5'-phosphoryl and 3'-hydroxyl groups in double-stranded DNA using NAD as a coenzyme and as the energy source for the reaction. It is essential for DNA replication and repair of damaged DNA. The sequence is that of DNA ligase from Trichormus variabilis (strain ATCC 29413 / PCC 7937) (Anabaena variabilis).